The sequence spans 600 residues: Pyranose dehydrogenase 2 (600 aa).

The N-terminal stretch at 1–25 (MLSRVAKLNSRLVSLALLGSQIAFG) is a signal peptide. 2 N-linked (GlcNAc...) asparagine glycosylation sites follow: N99 and N114. A Tele-8alpha-FAD histidine modification is found at H127. N-linked (GlcNAc...) asparagine glycosylation is found at N199, N275, and N342. The Proton acceptor role is filled by H535. The active site involves H579.

This sequence belongs to the GMC oxidoreductase family. As to quaternary structure, monomer. It depends on FAD as a cofactor. Post-translationally, N-glycosylated.

The protein resides in the secreted. It carries out the reaction pyranose + acceptor = pyranos-2-ulose + reduced acceptor.. The catalysed reaction is pyranose + acceptor = pyranos-3-ulose + reduced acceptor.. It catalyses the reaction pyranose + acceptor = pyranos-2,3-diulose + reduced acceptor.. The enzyme catalyses a pyranoside + acceptor = a pyranosid-3-ulose + reduced acceptor.. It carries out the reaction a pyranoside + acceptor = a pyranosid-3,4-diulose + reduced acceptor.. Catalyzes the single-oxidation or sequential double oxidation reaction of carbohydrates primarily at carbon-2 and/or carbon-3 with the concomitant reduction of the flavin. The enzyme exhibits a broad sugar substrate specificity, oxidizing different aldopyranoses to the corresponding C-1, C-2, C-3 or C-1,2, C-2,3 and C-3,4 (di)dehydro sugars with substrate-specific regioselectivity. Accepts only a narrow range of electron acceptors such as substituted benzoquinones and complexed metal ions and reacts extremely slowly with O(2) as acceptor. May play a role in the natural recycling of plant matter by oxidizing all major monosaccharides in lignocellulose and by reducing quinone compounds or reactive radical species generated during lignin depolymerization. This Leucoagaricus meleagris (Western flat-topped agaric) protein is Pyranose dehydrogenase 2.